The chain runs to 421 residues: UPF0415 protein C7orf25 homolog (421 aa).

This sequence belongs to the UPF0415 family.

The polypeptide is UPF0415 protein C7orf25 homolog (Rattus norvegicus (Rat)).